The following is a 445-amino-acid chain: Sodium/proton-dependent alanine carrier protein (445 aa).

Helical transmembrane passes span Ile-41–Ala-61, Ala-103–Asp-123, Phe-129–Phe-149, Ala-159–Ala-179, Val-188–Gly-208, Ala-249–Phe-269, Thr-304–Thr-324, Ala-349–Ala-369, and Met-375–Phe-395.

Belongs to the alanine or glycine:cation symporter (AGCS) (TC 2.A.25) family. The N-terminus is blocked.

The protein localises to the cell membrane. Its function is as follows. Mediates the active transport of alanine, driven by either an H(+) or Na(+) gradient. This Bacillus sp. (strain PS3) protein is Sodium/proton-dependent alanine carrier protein.